Here is a 76-residue protein sequence, read N- to C-terminus: Vasotab-TY2 (76 aa).

Residues 1–21 (MKFALFSVLVLMLIATFVAAD) form the signal peptide. Residues 22–76 (DCPRICTADYTPVCGTPSGGRRSANRTFANQCGLDSHNCLNKGATYDKLHDGECK) enclose the Kazal-like domain. Cystine bridges form between C23–C60, C27–C53, and C35–C75.

As to expression, expressed by the salivary gland.

Its subcellular location is the secreted. Vasodilator protein that inhibits vasoconstriction of isolated rat femoral artery induced by phenylephrine. Since platelet aggregation and vasoconstriction are key hemostatic responses, particularly in small wounds, this protein likely participates in the antihemostatic responses during blood feeding. Blocks L-type calcium channels (Cav1/CACNA1) in left ventricular myocytes isolated from rat hearts. The sequence is that of Vasotab-TY2 from Tabanus yao (Horsefly).